The chain runs to 367 residues: 3-isopropylmalate dehydrogenase (367 aa).

An NAD(+)-binding site is contributed by 80–93 (GKEWTHLPADEQPE). The substrate site is built by Arg-101, Arg-111, Arg-140, and Asp-230. The Mg(2+) site is built by Asp-230, Asp-254, and Asp-258. 288–300 (GSAPDLKGKNIAN) serves as a coordination point for NAD(+).

The protein belongs to the isocitrate and isopropylmalate dehydrogenases family. LeuB type 1 subfamily. As to quaternary structure, homodimer. Mg(2+) is required as a cofactor. Mn(2+) serves as cofactor.

Its subcellular location is the cytoplasm. It carries out the reaction (2R,3S)-3-isopropylmalate + NAD(+) = 4-methyl-2-oxopentanoate + CO2 + NADH. It functions in the pathway amino-acid biosynthesis; L-leucine biosynthesis; L-leucine from 3-methyl-2-oxobutanoate: step 3/4. In terms of biological role, catalyzes the oxidation of 3-carboxy-2-hydroxy-4-methylpentanoate (3-isopropylmalate) to 3-carboxy-4-methyl-2-oxopentanoate. The product decarboxylates to 4-methyl-2 oxopentanoate. The protein is 3-isopropylmalate dehydrogenase (leuB) of Buchnera aphidicola subsp. Cinara cedri (strain Cc).